A 64-amino-acid polypeptide reads, in one-letter code: Leader peptide SpeFL (64 aa).

Positions 32 to 38 match the Ornithine recognition loop motif; sequence HIRRTRH. Residue R35 coordinates L-ornithine.

This sequence belongs to the speF operon leader peptide family. As to quaternary structure, binds ornithine in stalled 70S ribosomes, blocking the upper two-thirds of the exit tunnel. Contacts 23S rRNA and ribosomal proteins L4 and L22.

A small protein (arrest peptide) encoded upstream of inducible ornithine carboxylase gene (speF) that controls expression of downstream genes (usually speF and potE) by transcriptional and translational attenuation. The protein is Leader peptide SpeFL of Haemophilus influenzae (strain ATCC 51907 / DSM 11121 / KW20 / Rd).